The sequence spans 162 residues: Deoxyuridine 5'-triphosphate nucleotidohydrolase (162 aa).

It belongs to the dUTPase family. Homotrimer. It depends on Mg(2+) as a cofactor.

The protein localises to the host cytoplasm. It is found in the virion. The enzyme catalyses dUTP + H2O = dUMP + diphosphate + H(+). The viral dUTPase may play a role in lowering the dUTP concentration in natural infections to minimize misincorporation of deoxyuridine into the viral DNA and ensure the fidelity of genome replication. This is Deoxyuridine 5'-triphosphate nucleotidohydrolase from Ornithodoros (relapsing fever ticks).